A 243-amino-acid chain; its full sequence is MKNPQKLAITFLPLYVIPTYTLCIKALYKNTHAGLLFSFLGFVLNTPAMSISGPPTTFILYRLHGVRRVLHWTLPDHEQTLYAFTGGSRSMAVKTDARCDTMSGGMIVLQHTHTVTLLTIDCSTDFSSYAFTHRDFHLQDKPHATFAMPFMSWVGSDPTSQLYSNVGGVLSVITEDDLSMCISIVIYGLRVNRPDDQTTPTPTPHQYTSQRRQPETNCPSPQPAFFTSDDDVLSLILRDAANA.

The segment at 193 to 226 (RPDDQTTPTPTPHQYTSQRRQPETNCPSPQPAFF) is disordered. Positions 205–219 (HQYTSQRRQPETNCP) are enriched in polar residues.

This sequence belongs to the alphaherpesvirinae HHV-1 UL4 family.

It is found in the host nucleus. In Varicella-zoster virus (strain Oka vaccine) (HHV-3), this protein is Nuclear protein UL4 homolog.